Reading from the N-terminus, the 474-residue chain is tRNA-2-methylthio-N(6)-dimethylallyladenosine synthase (474 aa).

Positions 3 to 120 constitute an MTTase N-terminal domain; sequence KKLHIKTWGC…LPEMINSVRG (118 aa). The [4Fe-4S] cluster site is built by C12, C49, C83, C157, C161, and C164. The Radical SAM core domain maps to 143–375; the sequence is RAEGPTAFVS…QERINQQAMA (233 aa). One can recognise a TRAM domain in the interval 378–441; the sequence is RRMLGTTQRI…PNSLRGKVVR (64 aa).

It belongs to the methylthiotransferase family. MiaB subfamily. Monomer. Requires [4Fe-4S] cluster as cofactor.

It is found in the cytoplasm. The catalysed reaction is N(6)-dimethylallyladenosine(37) in tRNA + (sulfur carrier)-SH + AH2 + 2 S-adenosyl-L-methionine = 2-methylsulfanyl-N(6)-dimethylallyladenosine(37) in tRNA + (sulfur carrier)-H + 5'-deoxyadenosine + L-methionine + A + S-adenosyl-L-homocysteine + 2 H(+). Catalyzes the methylthiolation of N6-(dimethylallyl)adenosine (i(6)A), leading to the formation of 2-methylthio-N6-(dimethylallyl)adenosine (ms(2)i(6)A) at position 37 in tRNAs that read codons beginning with uridine. The chain is tRNA-2-methylthio-N(6)-dimethylallyladenosine synthase from Escherichia coli (strain SMS-3-5 / SECEC).